The chain runs to 504 residues: Cytochrome P450 6B7 (504 aa).

Residue cysteine 445 coordinates heme.

The protein belongs to the cytochrome P450 family. Requires heme as cofactor.

It localises to the endoplasmic reticulum membrane. The protein localises to the microsome membrane. It catalyses the reaction an organic molecule + reduced [NADPH--hemoprotein reductase] + O2 = an alcohol + oxidized [NADPH--hemoprotein reductase] + H2O + H(+). This chain is Cytochrome P450 6B7 (CYP6B7), found in Helicoverpa armigera (Cotton bollworm).